A 338-amino-acid chain; its full sequence is Trace amine-associated receptor 9 (338 aa).

The Extracellular portion of the chain corresponds to 1-23 (MELCYENVNGSCIKSSYSPWPRA). N9 carries an N-linked (GlcNAc...) asparagine glycan. Cystine bridges form between C12/C176 and C95/C180. A helical transmembrane segment spans residues 24-48 (ILYAVLGLGALLAVFGNLLVITAIL). Topologically, residues 49–58 (HFKQLHTPTN) are cytoplasmic. A helical membrane pass occupies residues 59 to 80 (FLVASLACADFLVGVTVMPFST). Residues 81–95 (VRSVEGCWYFGDTYC) are Extracellular-facing. Residues 96–118 (KFHTCFDTSFCFASLFHLCCISI) traverse the membrane as a helical segment. 2 residues coordinate spermidine: D102 and T103. Topologically, residues 119–138 (DRYVAVTDPLTYPTKFTISV) are cytoplasmic. Residues 139–160 (SGVCIALSWFFSVTYSFSIFYT) form a helical membrane-spanning segment. The Extracellular portion of the chain corresponds to 161–186 (GANEEGIEELVVALTCVGGCQAPLNQ). Positions 164-177 (EEGIEELVVALTCV) are extracellular Loop 2 (ECL2). A helical membrane pass occupies residues 187-208 (NWVLLCFLLFFLPTVVMVFLYG). Topologically, residues 209-246 (RIFLVAKQQARKIEGSANQPQASSESYKERVARRERKA) are cytoplasmic. A helical transmembrane segment spans residues 247-270 (AKTLGIAMAAFLVSWLPYIIDAVI). Residues 271-283 (DAYMNFITPAYVY) lie on the Extracellular side of the membrane. Residues 284 to 304 (EILVWCVYYNSAMNPLIYAFF) form a helical membrane-spanning segment. Over 305–338 (YPWFRKAIKLIVSGKVFRADSSRTNLFSEEAGAG) the chain is Cytoplasmic.

It belongs to the G-protein coupled receptor 1 family. In terms of tissue distribution, mainly expressed in neurons of the olfactory epithelium. Also expressed in the intestine.

The protein resides in the cell membrane. Olfactory receptor specific for trace amines, such as triethylamine, N-methylpiperidine, N,N-dimethylcyclohexylamine (DMCHA), beta-phenylethylamine (beta-PEA), cadaverine (CAD) and polyamines such as spermidine. Trace amine compounds are enriched in animal body fluids and act on trace amine-associated receptors (TAARs) to elicit both intraspecific and interspecific innate behaviors. Trace amine-binding causes a conformation change that triggers signaling via G(s)-class of G alpha proteins (GNAL or GNAS). In mature olfactory sensory neurons, Taar9 is coupled with GNAL/G(olf)G alpha protein and mediates activation of adenylate cyclase activity to activate cAMP signaling and eventually transmit odorant signals to achieve membrane depolarization. In immature olfactory sensory neurons, Taar9 is coupled with GNAS/G(s) G alpha proteins. The protein is Trace amine-associated receptor 9 of Rattus norvegicus (Rat).